Here is a 715-residue protein sequence, read N- to C-terminus: Palmitoyltransferase ZDHHC5 (715 aa).

At 1–13 (MPAESGKRFKPSK) the chain is on the cytoplasmic side. A helical transmembrane segment spans residues 14–34 (YVPVSAAAIFLVGATTLFFAF). The Extracellular segment spans residues 35-52 (TCPGLSLNVSPAVPIYNA). Residues 53–73 (IMFLFVLANFSMATFMDPGIF) form a helical membrane-spanning segment. Topologically, residues 74–148 (PRAEEDEDKE…NCIGRRNYRY (75 aa)) are cytoplasmic. The residue at position 91 (Y91) is a Phosphotyrosine. Residues 104 to 154 (KWCATCRFYRPPRCSHCSVCDNCVEEFDHHCPWVNNCIGRRNYRYFFLFLL) enclose the DHHC domain. Catalysis depends on C134, which acts as the S-palmitoyl cysteine intermediate. A helical transmembrane segment spans residues 149-169 (FFLFLLSLTAHIMGVFGFGLL). At 170 to 191 (YVLYHIEELSGVRTAVTMAVMC) the chain is on the extracellular side. A helical transmembrane segment spans residues 192 to 212 (VAGLFFIPVAGLTGFHVVLVA). Residues 213–715 (RGRTTNEQVT…VGGTTYEISV (503 aa)) are Cytoplasmic-facing. S247 is modified (phosphoserine). The tract at residues 289-715 (GELRRTKSKG…VGGTTYEISV (427 aa)) is disordered. Position 294 is a phosphothreonine (T294). 2 positions are modified to phosphoserine: S296 and S299. T303 carries the phosphothreonine modification. At S345 the chain carries Phosphoserine. Residues T348 and T350 each carry the phosphothreonine modification. The span at 359-373 (SSSSTSAAMPHSSSA) shows a compositional bias: low complexity. Phosphoserine is present on residues S380, S398, S406, and S409. The residue at position 411 (T411) is a Phosphothreonine. 4 positions are modified to phosphoserine: S415, S425, S429, and S432. The segment covering 422–432 (SSGSRSSSLKS) has biased composition (low complexity). Position 436 is a phosphothreonine (T436). Over residues 442–478 (QLQSIRSEGTTSTSYKSLANQTRNGSLSYDSLLTPSD) the composition is skewed to polar residues. Phosphoserine is present on residues S529 and S554. The segment covering 581 to 597 (PRTSSSSDDSKRSPLSK) has biased composition (low complexity). Position 617 is an omega-N-methylarginine (R617). A Phosphoserine modification is found at S621. T659 is subject to Phosphothreonine. Over residues 666 to 677 (LKTTYSKSNGQP) the composition is skewed to polar residues. Phosphoserine is present on residues S684 and S694. R697 carries the post-translational modification Omega-N-methylarginine.

Belongs to the DHHC palmitoyltransferase family. ERF2/ZDHHC9 subfamily. In terms of processing, phosphorylation regulates association with endocytic proteins and its subcellular localization. Phosphorylation by LYN during fatty acid uptake leads to inactivation of the activity. Post-translationally, autopalmitoylated. Palmitoylation of the C-terminal tail regulates stimulation-dependent plasma membrane motility. Highly enriched in brain, detectable in liver and heart, and undetectable in most other tissues.

It localises to the cell membrane. The catalysed reaction is L-cysteinyl-[protein] + hexadecanoyl-CoA = S-hexadecanoyl-L-cysteinyl-[protein] + CoA. Palmitoyltransferase that catalyzes the addition of palmitate onto various protein substrates such as CTNND2, CD36, GSDMD, NLRP3, NOD1, NOD2, STAT3 and S1PR1 thus plays a role in various biological processes including cell adhesion, inflammation, fatty acid uptake, bacterial sensing or cardiac functions. Plays an important role in the regulation of synapse efficacy by mediating palmitoylation of delta-catenin/CTNND2, thereby increasing synaptic delivery and surface stabilization of alpha-amino-3-hydroxy-5-methyl-4-isoxazole propionic acid receptors (AMPARs). Under basal conditions, remains at the synaptic membrane through FYN-mediated phosphorylation that prevents association with endocytic proteins. Neuronal activity enhances the internalization and trafficking of DHHC5 from spines to dendritic shafts where it palmitoylates delta-catenin/CTNND2. Regulates cell adhesion at the plasma membrane by palmitoylating GOLGA7B and DSG2. Plays a role in innate immune response by mediating the palmitoylation of NOD1 and NOD2 and their proper recruitment to the bacterial entry site and phagosomes. Also participates in fatty acid uptake by palmitoylating CD36 and thereby targeting it to the plasma membrane. Upon binding of fatty acids to CD36, gets phosphorylated by LYN leading to inactivation and subsequent CD36 caveolar endocytosis. Controls oligodendrocyte development by catalyzing STAT3 palmitoylation. Acts as a regulator of inflammatory response by mediating palmitoylation of NLRP3 and GSDMD. Palmitoylates NLRP3 to promote inflammasome assembly and activation. Activates pyroptosis by catalyzing palmitoylation of gasdermin-D (GSDMD), thereby promoting membrane translocation and pore formation of GSDMD. The protein is Palmitoyltransferase ZDHHC5 (Zdhhc5) of Mus musculus (Mouse).